A 579-amino-acid chain; its full sequence is DELLA protein RGA2 (579 aa).

The disordered stretch occupies residues 1–31 (MKRDLHQFQGPPDTRFPNHGTANTGSSSKDK). Positions 45–49 (DELLA) match the DELLA motif motif. Low complexity-rich tracts occupy residues 149-162 (SSSSSNQAGDNSQS) and 174-183 (SLVTGTTVTT). The tract at residues 149–183 (SSSSSNQAGDNSQSTKRLKSCSSPDSLVTGTTVTT) is disordered. The region spanning 205–574 (VDSQENGVRL…RPLITTSAWK (370 aa)) is the GRAS domain. The interval 212-266 (VRLVHALMACAEAIQNNDLSIAEALVKQIGFLAVSQAGAMRKVATYFAEALARRI) is leucine repeat I (LRI). The VHIID stretch occupies residues 285 to 350 (QMHFYETCPY…GGPPVFRLTG (66 aa)). A VHIID motif is present at residues 316–320 (VHVID). Positions 364-396 (EVGCKLAQLAEAIHVEFEYRGFVANSLADLDAS) are leucine repeat II (LRII). Residues 408–495 (VAVNSVFELH…EVYLGKQICN (88 aa)) are PFYRE. Positions 416 to 420 (LHKLL) match the LXXLL motif motif. The segment at 498–574 (ACEGPDRVER…RPLITTSAWK (77 aa)) is SAW.

Belongs to the GRAS family. DELLA subfamily. Phosphorylated. Post-translationally, ubiquitinated. Upon GA application it is ubiquitinated, leading to its subsequent degradation.

The protein localises to the nucleus. In terms of biological role, probable transcriptional regulator that acts as a repressor of the gibberellin (GA) signaling pathway. Probably acts by participating in large multiprotein complexes that represses transcription of GA-inducible genes. Upon GA application, it is degraded by the proteasome, allowing the GA signaling pathway. The chain is DELLA protein RGA2 (RGA2) from Brassica campestris (Field mustard).